The chain runs to 145 residues: uncharacterized protein (145 aa).

Residues 1–49 (MLSIFKNLLGTSEEDGTTQEANSKDTKGLKEERKRKKRKNKYKIPPGHT) form a disordered region. The span at 22–32 (NSKDTKGLKEE) shows a compositional bias: basic and acidic residues. The span at 33–42 (RKRKKRKNKY) shows a compositional bias: basic residues. S68 is subject to Phosphoserine. The Cytochrome b5 heme-binding domain maps to 69 to 145 (PISVTAEELA…LKTSFVGYLV (77 aa)). Residues H104 and H127 each coordinate heme.

The protein belongs to the cytochrome b5 family.

The protein localises to the cytoplasm. This is an uncharacterized protein from Schizosaccharomyces pombe (strain 972 / ATCC 24843) (Fission yeast).